The following is a 128-amino-acid chain: Small ribosomal subunit protein uS12 (128 aa).

Residues 1–29 are disordered; the sequence is MPTINQLIRKGREPKERKSKSPALMGNPQ. The residue at position 89 (Asp-89) is a 3-methylthioaspartic acid. Positions 106–128 are disordered; that stretch reads GVEGRRQGRSKYGAKRPKEGGKK.

This sequence belongs to the universal ribosomal protein uS12 family. In terms of assembly, part of the 30S ribosomal subunit. Contacts proteins S8 and S17. May interact with IF1 in the 30S initiation complex.

With S4 and S5 plays an important role in translational accuracy. Functionally, interacts with and stabilizes bases of the 16S rRNA that are involved in tRNA selection in the A site and with the mRNA backbone. Located at the interface of the 30S and 50S subunits, it traverses the body of the 30S subunit contacting proteins on the other side and probably holding the rRNA structure together. The combined cluster of proteins S8, S12 and S17 appears to hold together the shoulder and platform of the 30S subunit. This is Small ribosomal subunit protein uS12 from Dictyoglomus turgidum (strain DSM 6724 / Z-1310).